Reading from the N-terminus, the 69-residue chain is NAD(P)H-quinone oxidoreductase subunit O (69 aa).

It belongs to the complex I NdhO subunit family. In terms of assembly, NDH-1 can be composed of about 15 different subunits; different subcomplexes with different compositions have been identified which probably have different functions.

It localises to the cellular thylakoid membrane. It catalyses the reaction a plastoquinone + NADH + (n+1) H(+)(in) = a plastoquinol + NAD(+) + n H(+)(out). The catalysed reaction is a plastoquinone + NADPH + (n+1) H(+)(in) = a plastoquinol + NADP(+) + n H(+)(out). Functionally, NDH-1 shuttles electrons from an unknown electron donor, via FMN and iron-sulfur (Fe-S) centers, to quinones in the respiratory and/or the photosynthetic chain. The immediate electron acceptor for the enzyme in this species is believed to be plastoquinone. Couples the redox reaction to proton translocation, and thus conserves the redox energy in a proton gradient. Cyanobacterial NDH-1 also plays a role in inorganic carbon-concentration. The protein is NAD(P)H-quinone oxidoreductase subunit O of Acaryochloris marina (strain MBIC 11017).